A 245-amino-acid polypeptide reads, in one-letter code: UPF0319 protein VV0984 (245 aa).

The N-terminal stretch at 1–20 is a signal peptide; the sequence is MRYIGKWMMLGALVSSSVFA.

It belongs to the UPF0319 family.

The polypeptide is UPF0319 protein VV0984 (Vibrio vulnificus (strain YJ016)).